The sequence spans 104 residues: Naphthalene 1,2-dioxygenase/salicylate 5-hydroxylase systems, ferredoxin component (104 aa).

The region spanning 6-101 (IDAACLDDIP…VKIENMRVML (96 aa)) is the Rieske domain. [2Fe-2S] cluster-binding residues include Cys-45, His-47, Cys-64, and His-67.

This sequence belongs to the bacterial ring-hydroxylating dioxygenase ferredoxin component family. Ferredoxin NagAb belongs to both the salicylate 5-hydroxylase (S5H) and the naphthalene 1,2-dioxygenase (NDO) multicomponent enzyme systems. The NDO multicomponent enzyme system is composed of an electron transfer component and a dioxygenase component (iron sulfur protein (ISP)). The electron transfer component is composed of a ferredoxin reductase (NagAa) and a ferredoxin (NagAb), and the dioxygenase component is formed by a large alpha subunit (NagAc) and a small beta subunit (NagAd). The S5H multicomponent enzyme system is composed of an electron transfer component and a monooxygenase component. The electron transfer component is composed of a ferredoxin reductase (NagAa) and a ferredoxin (NagAb), and the monooxygenase component is formed by a large subunit (NagG) and a small subunit (NagH). Requires [2Fe-2S] cluster as cofactor.

It functions in the pathway aromatic compound metabolism; naphthalene degradation. Component of two multicomponent enzyme systems which are involved in the catabolism of naphthalene. Plays a role as an electron transfer component for both salicylate 5-hydroxylase (S5H) and naphthalene 1,2-dioxygenase (NDO) systems, by transferring electrons to the oxygenase components. This chain is Naphthalene 1,2-dioxygenase/salicylate 5-hydroxylase systems, ferredoxin component, found in Ralstonia sp.